Reading from the N-terminus, the 321-residue chain is Histidine N-alpha-methyltransferase (321 aa).

Position 56 (Tyr-56) interacts with L-histidine. S-adenosyl-L-methionine is bound by residues Gly-86, Lys-92, Asp-113, and 141 to 142; that span reads DF. Residues Asn-166, Tyr-206, and 282–284 contribute to the L-histidine site; that span reads EVS.

The protein belongs to the methyltransferase superfamily. EgtD family. As to quaternary structure, monomer.

The catalysed reaction is L-histidine + 3 S-adenosyl-L-methionine = hercynine + 3 S-adenosyl-L-homocysteine + 3 H(+). Its pathway is amino-acid biosynthesis; ergothioneine biosynthesis. Functionally, catalyzes the SAM-dependent triple methylation of the alpha-amino group of histidine to form hercynine, a step in the biosynthesis pathway of ergothioneine. Among all the proteinogenic amino acids, only L-histidine is a substrate. This Mycolicibacterium smegmatis (strain ATCC 700084 / mc(2)155) (Mycobacterium smegmatis) protein is Histidine N-alpha-methyltransferase.